A 611-amino-acid polypeptide reads, in one-letter code: DNA-directed RNA polymerase subunit Rpo2C (611 aa).

Positions 547, 550, 565, and 568 each coordinate Zn(2+).

The protein belongs to the RNA polymerase beta chain family. As to quaternary structure, part of the RNA polymerase complex. The cofactor is Zn(2+).

It localises to the cytoplasm. The catalysed reaction is RNA(n) + a ribonucleoside 5'-triphosphate = RNA(n+1) + diphosphate. Its function is as follows. DNA-dependent RNA polymerase (RNAP) catalyzes the transcription of DNA into RNA using the four ribonucleoside triphosphates as substrates. The Rpo2 subunit (Rpo2N and Rpo2C in this organism) is implicated in DNA promoter recognition and in nucleotide binding. This is DNA-directed RNA polymerase subunit Rpo2C from Methanococcus vannielii (strain ATCC 35089 / DSM 1224 / JCM 13029 / OCM 148 / SB).